Reading from the N-terminus, the 336-residue chain is MMKIIFFGTPLFAVPTLKKLLDNPKIEVTAVVTQPDKRRGRGNKLIPSPVKSVAVAHNIPVWQPRRVKKNPETLNLLREAQADVFVVVAYGQILSTEILEMPKLGCVNVHGSILPKYRGAAPIQWSIYHGEAETGNTTMLMDVGMDTGPMLLKSIIPIGLLDNAVSIAEILAKDGADLLLETLLRLEDKEIEPIPQDNSLATYAPLIQNSDYEIDWSRSALDIHNQIRGFFPNCFTSFRGQSLKVMATIPVGTEYWSELPPELQKLEKVWSSESEVVGNIGEVVKVIKGLGPVVQTGSGWLLLWQVQLAGKKVVSGWDFANGTRLLVGEVSEVFSR.

(6S)-5,6,7,8-tetrahydrofolate is bound at residue 112–115; the sequence is SILP.

It belongs to the Fmt family.

It catalyses the reaction L-methionyl-tRNA(fMet) + (6R)-10-formyltetrahydrofolate = N-formyl-L-methionyl-tRNA(fMet) + (6S)-5,6,7,8-tetrahydrofolate + H(+). Functionally, attaches a formyl group to the free amino group of methionyl-tRNA(fMet). The formyl group appears to play a dual role in the initiator identity of N-formylmethionyl-tRNA by promoting its recognition by IF2 and preventing the misappropriation of this tRNA by the elongation apparatus. The chain is Methionyl-tRNA formyltransferase from Trichodesmium erythraeum (strain IMS101).